We begin with the raw amino-acid sequence, 331 residues long: MQTSHYAAEKDMQDAAPRLTFTLRDEERLMMKIGVFVPIGNNGWLISTHAPQYMPTFELNKAIVQKAEHYHFDFALSMIKLRGFGGKTEFWDHNLESFTLMAGLAAVTSRIQIYATAATLTLPPAIVARMAATIDSISGGRFGVNLVTGWQKPEYEQMGIWPGDDYFSRRYDYLTEYVQVLRDLWGTGKSDFKGDFFTMNDCRVSPQPSVPMKVICAGQSDAGMAFSAQYADFNFCFGKGVNTPTAFAPTAARMKQAAEQTGRDVGSYVLFMVIADETDDAARTKWEHYKAGADEEALSWLTEQSQKDTRSGTDTNVRQMADPTSASAFNH.

FMN-binding positions include 79-80 (IK), N145, E154, 170-171 (RY), and S220. A disordered region spans residues 300–331 (WLTEQSQKDTRSGTDTNVRQMADPTSASAFNH). Residues 312 to 331 (GTDTNVRQMADPTSASAFNH) are compositionally biased toward polar residues.

This sequence belongs to the NtaA/SnaA/DszA monooxygenase family. RutA subfamily.

The enzyme catalyses uracil + FMNH2 + NADH + O2 = (Z)-3-ureidoacrylate + FMN + NAD(+) + H2O + H(+). The catalysed reaction is thymine + FMNH2 + NADH + O2 = (Z)-2-methylureidoacrylate + FMN + NAD(+) + H2O + H(+). Functionally, catalyzes the pyrimidine ring opening between N-3 and C-4 by an unusual flavin hydroperoxide-catalyzed mechanism, adding oxygen atoms in the process to yield ureidoacrylate peracid, that immediately reacts with FMN forming ureidoacrylate and FMN-N(5)-oxide. The FMN-N(5)-oxide reacts spontaneously with NADH to produce FMN. Requires the flavin reductase RutF to regenerate FMN in vivo. This chain is Pyrimidine monooxygenase RutA, found in Escherichia coli O7:K1 (strain IAI39 / ExPEC).